Here is a 374-residue protein sequence, read N- to C-terminus: Alanine racemase (374 aa).

The active-site Proton acceptor; specific for D-alanine is the lysine 34. Lysine 34 carries the N6-(pyridoxal phosphate)lysine modification. Arginine 147 serves as a coordination point for substrate. The active-site Proton acceptor; specific for L-alanine is tyrosine 271. Methionine 319 lines the substrate pocket.

The protein belongs to the alanine racemase family. The cofactor is pyridoxal 5'-phosphate.

It carries out the reaction L-alanine = D-alanine. The protein operates within amino-acid biosynthesis; D-alanine biosynthesis; D-alanine from L-alanine: step 1/1. Catalyzes the interconversion of L-alanine and D-alanine. May also act on other amino acids. This chain is Alanine racemase (alr), found in Haemophilus ducreyi (strain 35000HP / ATCC 700724).